We begin with the raw amino-acid sequence, 340 residues long: MEQKLRTLAQEALAALESAKTPEALNDIRVKYLGKKGEVTQLLRGMGALSAEERPRVGQVANEVRASIEQALEERNARVKEAQKEQMLAAETIDVTLPGNQFGLGRMHPLTQVMQEIESIFMGLGFKIAEGPEVELDYYNFEALNLPKDHPARDMQDTFFINPEVLLRTHTSPVQVRTMEKMVPQVPIKIICPGRVYRRDDDATHSPMFHQVEGLVVDKHITFADLKGVLATFARQMFGLDTKTRLRPSYFPFTEPSAEVDISCFNCKGNGCRVCKGSGWLEILGSGMVHPRVLEMSGYNPEEVTGFAFGMGVERIAMLKYGIDDLRLLFDNDLRFLSQF.

Glu255 is a Mg(2+) binding site.

The protein belongs to the class-II aminoacyl-tRNA synthetase family. Phe-tRNA synthetase alpha subunit type 1 subfamily. Tetramer of two alpha and two beta subunits. Mg(2+) serves as cofactor.

Its subcellular location is the cytoplasm. The enzyme catalyses tRNA(Phe) + L-phenylalanine + ATP = L-phenylalanyl-tRNA(Phe) + AMP + diphosphate + H(+). The polypeptide is Phenylalanine--tRNA ligase alpha subunit (Desulforamulus reducens (strain ATCC BAA-1160 / DSM 100696 / MI-1) (Desulfotomaculum reducens)).